We begin with the raw amino-acid sequence, 624 residues long: Aeromonas extracellular serine protease (624 aa).

A signal peptide spans 1-24 (MKQTSLALAITALLSTLPSALVQA). Residues C28 and C48 are joined by a disulfide bond. N53 lines the Ca(2+) pocket. The Peptidase S8 domain occupies 59 to 421 (QWYLLNSGQD…GKVRDVKGLE (363 aa)). D102 acts as the Charge relay system in catalysis. Residue D111 coordinates Ca(2+). Residues 116–140 (VRPGSKNVVTGSDDPTPTDPDTAHG) are disordered. Catalysis depends on H139, which acts as the Charge relay system. Ca(2+)-binding residues include V150, N152, I154, T156, D321, L322, G324, M327, N330, and C350. Cysteines 325 and 350 form a disulfide. S360 functions as the Charge relay system in the catalytic mechanism. The 167-residue stretch at 456–622 (LPPLVQLPWQ…SLRVLGHDAN (167 aa)) folds into the P/Homo B domain. Positions 478, 512, 577, 579, 602, and 603 each coordinate Ca(2+).

This sequence belongs to the peptidase S8 family. Furin subfamily. In terms of assembly, forms a complex with the chaperone ORF2 in the periplasm. After translocation of the ASP-ORF2 complex from the periplasm to the extracellular space, the complex is dissociated in a pH-dependent manner. Requires Ca(2+) as cofactor.

It localises to the periplasm. The protein resides in the secreted. The enzyme catalyses Cleavage of -Lys-Lys-|-Xaa and -Lys-Arg-|-Xaa bonds.. With respect to regulation, folding, maturation and production of the active form of the protease by the cell requires a protein (ORF2), encoded just downstream of asp, which acts as a chaperone. Formation of a complex with ORF2 in the periplasm also inactivates the protease activity and likely protects ASP from intrinsic proteases. In vitro, protease activity is inhibited by human alpha-2-macroglobulin, suggesting that this inhibitor can impede ASP virulence activities in A.sobria infection sites. However, slow ASP inhibition by alpha-2-macroglobulin in plasma may indicate insufficient ASP control in vivo. Activity is inhibited by serine protease inhibitors such as 4-(2-aminoethyl)-benzenesulfonyl fluoride (AEBSF) and diisopropyl fluorophosphate (DFP). Not inhibited by metallo-protease inhibitors and cysteine protease inhibitors. The treatment with reagents to modify sulfhydryl group do not reduce the activity. Exhibits serine protease activity. Preferentially cleaves the peptide bond following two basic residues, one of which is Lys, but does not recognize the bond following a single basic residue. Probable potent virulence factor that cleaves various host plasma proteins, including prekallikrein, prothrombin and fibrinogen. ASP induces vascular leakage and reduction in blood pressure by activating the host plasma kallikrein/kinin system. It affects the host coagulation system during infection through activation of prothrombin to alpha-thrombin and degradation of fibrinogen, which impairs plasma clottability. It also hydrolyzes the complement component C5, releasing the C5a anaphylatoxin, which causes the formation of pus and edema. In addition, degrades its external chaperone ORF2 after the secretion of the ASP-ORF2 complex. The protein is Aeromonas extracellular serine protease of Aeromonas sobria.